The sequence spans 451 residues: Chromosomal replication initiator protein DnaA (451 aa).

The tract at residues 1-72 is domain I, interacts with DnaA modulators; the sequence is MSLPTSLWDK…TELLDELSDT (72 aa). Positions 72–114 are domain II; sequence TPPQIRLQIGSRSTEMPTKNSHEPSHRKAAAPPAGTTISHTQA. The segment covering 81-90 has biased composition (polar residues); the sequence is GSRSTEMPTK. The disordered stretch occupies residues 81-106; that stretch reads GSRSTEMPTKNSHEPSHRKAAAPPAG. Positions 115–331 are domain III, AAA+ region; it reads NINSNFTFDS…GALKRVIANA (217 aa). ATP-binding residues include Gly-159, Gly-161, Lys-162, and Thr-163. The interval 332–451 is domain IV, binds dsDNA; that stretch reads HFTGQSITVD…YKNLMRILSG (120 aa).

This sequence belongs to the DnaA family. Oligomerizes as a right-handed, spiral filament on DNA at oriC.

The protein localises to the cytoplasm. Its function is as follows. Plays an essential role in the initiation and regulation of chromosomal replication. ATP-DnaA binds to the origin of replication (oriC) to initiate formation of the DNA replication initiation complex once per cell cycle. Binds the DnaA box (a 9 base pair repeat at the origin) and separates the double-stranded (ds)DNA. Forms a right-handed helical filament on oriC DNA; dsDNA binds to the exterior of the filament while single-stranded (ss)DNA is stabiized in the filament's interior. The ATP-DnaA-oriC complex binds and stabilizes one strand of the AT-rich DNA unwinding element (DUE), permitting loading of DNA polymerase. After initiation quickly degrades to an ADP-DnaA complex that is not apt for DNA replication. Binds acidic phospholipids. This chain is Chromosomal replication initiator protein DnaA, found in Coxiella burnetii (strain CbuK_Q154) (Coxiella burnetii (strain Q154)).